A 156-amino-acid polypeptide reads, in one-letter code: 6,7-dimethyl-8-ribityllumazine synthase (156 aa).

Residues phenylalanine 25, 59-61, and 83-85 each bind 5-amino-6-(D-ribitylamino)uracil; these read AFE and AVI. (2S)-2-hydroxy-3-oxobutyl phosphate is bound at residue 88–89; the sequence is AT. The active-site Proton donor is histidine 91. Phenylalanine 116 contributes to the 5-amino-6-(D-ribitylamino)uracil binding site. Arginine 130 contributes to the (2S)-2-hydroxy-3-oxobutyl phosphate binding site.

Belongs to the DMRL synthase family.

It catalyses the reaction (2S)-2-hydroxy-3-oxobutyl phosphate + 5-amino-6-(D-ribitylamino)uracil = 6,7-dimethyl-8-(1-D-ribityl)lumazine + phosphate + 2 H2O + H(+). The protein operates within cofactor biosynthesis; riboflavin biosynthesis; riboflavin from 2-hydroxy-3-oxobutyl phosphate and 5-amino-6-(D-ribitylamino)uracil: step 1/2. Its function is as follows. Catalyzes the formation of 6,7-dimethyl-8-ribityllumazine by condensation of 5-amino-6-(D-ribitylamino)uracil with 3,4-dihydroxy-2-butanone 4-phosphate. This is the penultimate step in the biosynthesis of riboflavin. This is 6,7-dimethyl-8-ribityllumazine synthase from Nitratidesulfovibrio vulgaris (strain DSM 19637 / Miyazaki F) (Desulfovibrio vulgaris).